Consider the following 340-residue polypeptide: Ribosomal RNA large subunit methyltransferase F (340 aa).

The segment at 1 to 36 (MNAPRTPKPARKKPDSATPAKPVEPRKEASLHPRNR) is disordered.

Belongs to the methyltransferase superfamily. METTL16/RlmF family.

Its subcellular location is the cytoplasm. The enzyme catalyses adenosine(1618) in 23S rRNA + S-adenosyl-L-methionine = N(6)-methyladenosine(1618) in 23S rRNA + S-adenosyl-L-homocysteine + H(+). Functionally, specifically methylates the adenine in position 1618 of 23S rRNA. The sequence is that of Ribosomal RNA large subunit methyltransferase F from Pseudomonas fluorescens (strain Pf0-1).